Here is a 227-residue protein sequence, read N- to C-terminus: Probable GTP-binding protein EngB (227 aa).

One can recognise an EngB-type G domain in the interval 41–216 (GRPEVAFAGR…RAEIARFAVP (176 aa)). Residues 49–56 (GRSNVGKS), 76–80 (GRTKQ), 94–97 (DMPG), 161–164 (TKCD), and 195–197 (TSS) contribute to the GTP site. Positions 56 and 78 each coordinate Mg(2+).

The protein belongs to the TRAFAC class TrmE-Era-EngA-EngB-Septin-like GTPase superfamily. EngB GTPase family. Requires Mg(2+) as cofactor.

Functionally, necessary for normal cell division and for the maintenance of normal septation. The sequence is that of Probable GTP-binding protein EngB from Gluconobacter oxydans (strain 621H) (Gluconobacter suboxydans).